We begin with the raw amino-acid sequence, 436 residues long: 3-ketoacyl-CoA thiolase (436 aa).

Cysteine 99 (acyl-thioester intermediate) is an active-site residue. Catalysis depends on proton acceptor residues histidine 392 and cysteine 422.

Belongs to the thiolase-like superfamily. Thiolase family. Heterotetramer of two alpha chains (FadJ) and two beta chains (FadI).

It is found in the cytoplasm. The catalysed reaction is an acyl-CoA + acetyl-CoA = a 3-oxoacyl-CoA + CoA. It functions in the pathway lipid metabolism; fatty acid beta-oxidation. Functionally, catalyzes the final step of fatty acid oxidation in which acetyl-CoA is released and the CoA ester of a fatty acid two carbons shorter is formed. This Shewanella woodyi (strain ATCC 51908 / MS32) protein is 3-ketoacyl-CoA thiolase.